A 239-amino-acid chain; its full sequence is Large ribosomal subunit protein uL2 (239 aa).

Belongs to the universal ribosomal protein uL2 family.

The protein localises to the cytoplasm. This Encephalitozoon cuniculi (strain GB-M1) (Microsporidian parasite) protein is Large ribosomal subunit protein uL2 (RPL8).